The chain runs to 180 residues: MSRVGKMPVKIPEKVKVSVDGNVVKVEGPKGKMHFPTNPLVSVQVDKGEVKVARQDESHVAKGLHGLTRTLVKNALEGVVKGYEKGLEINGVGFKAEVKGKEIHFTLGFSHPVVFKLPEGVTAEVDAKQTKLTIRSVDKHLLGLTAAKVRDLRPPEPYKGKGIKYADETIRRKEGKTGAA.

The protein belongs to the universal ribosomal protein uL6 family. As to quaternary structure, part of the 50S ribosomal subunit.

Its function is as follows. This protein binds to the 23S rRNA, and is important in its secondary structure. It is located near the subunit interface in the base of the L7/L12 stalk, and near the tRNA binding site of the peptidyltransferase center. The protein is Large ribosomal subunit protein uL6 of Anaeromyxobacter dehalogenans (strain 2CP-C).